The primary structure comprises 359 residues: DNA-directed RNA polymerase RPB3-11 homolog (359 aa).

The protein in the N-terminal section; belongs to the archaeal RpoD/eukaryotic RPB3 RNA polymerase subunit family. It in the C-terminal section; belongs to the archaeal RpoL/eukaryotic RPB11/RPC19 RNA polymerase subunit family. As to quaternary structure, part of the viral DNA-directed RNA polymerase that consists of 8 polII-like subunits (RPB1, RPB2, RPB3, RPB5, RPB6, RPB7, RPB9, RPB10), a capping enzyme and a termination factor.

The protein resides in the host cytoplasm. Its subcellular location is the virion. Its function is as follows. Component of the DNA-directed RNA polymerase (RNAP) that catalyzes the transcription in the cytoplasm of viral DNA into RNA using the four ribonucleoside triphosphates as substrates. In Ornithodoros (relapsing fever ticks), this protein is DNA-directed RNA polymerase RPB3-11 homolog.